Reading from the N-terminus, the 124-residue chain is MPTTQQLIRKGRKTEEETSDAPALEGSPQRRGVCTRVYTTTPKKPNSALRKVARVRLTNGNEVTAYIPGEGHNLQEHSIVLVRGGRVKDLPGVKYHIVRGALDTAGVEERRQGRSKYGTKKPRE.

Residues 1–42 (MPTTQQLIRKGRKTEEETSDAPALEGSPQRRGVCTRVYTTTP) are disordered. Asp-89 is modified (3-methylthioaspartic acid). Residues 105–124 (AGVEERRQGRSKYGTKKPRE) form a disordered region. Over residues 113 to 124 (GRSKYGTKKPRE) the composition is skewed to basic residues.

This sequence belongs to the universal ribosomal protein uS12 family. Part of the 30S ribosomal subunit. Contacts proteins S8 and S17. May interact with IF1 in the 30S initiation complex.

Its function is as follows. With S4 and S5 plays an important role in translational accuracy. Interacts with and stabilizes bases of the 16S rRNA that are involved in tRNA selection in the A site and with the mRNA backbone. Located at the interface of the 30S and 50S subunits, it traverses the body of the 30S subunit contacting proteins on the other side and probably holding the rRNA structure together. The combined cluster of proteins S8, S12 and S17 appears to hold together the shoulder and platform of the 30S subunit. The sequence is that of Small ribosomal subunit protein uS12 from Salinibacter ruber (strain DSM 13855 / M31).